The primary structure comprises 303 residues: tRNA pseudouridine synthase B (303 aa).

Catalysis depends on D38, which acts as the Nucleophile.

Belongs to the pseudouridine synthase TruB family. Type 1 subfamily.

It carries out the reaction uridine(55) in tRNA = pseudouridine(55) in tRNA. Responsible for synthesis of pseudouridine from uracil-55 in the psi GC loop of transfer RNAs. The protein is tRNA pseudouridine synthase B of Levilactobacillus brevis (strain ATCC 367 / BCRC 12310 / CIP 105137 / JCM 1170 / LMG 11437 / NCIMB 947 / NCTC 947) (Lactobacillus brevis).